A 237-amino-acid polypeptide reads, in one-letter code: CD209 antigen-like protein D (237 aa).

Residues 1 to 54 are Cytoplasmic-facing; sequence MSDSMESKTQQVVIPEDEECLMSGTRYSDISSRLQTKFGIKSLAEYTKQSRNPL. A helical; Signal-anchor for type II membrane protein transmembrane segment spans residues 55–75; the sequence is VLQLLSFLFLAGLLLIILILV. At 76–237 the chain is on the extracellular side; sequence SKVPSSEVQN…KVSTSSCTTK (162 aa). A disulfide bridge links Cys-106 with Cys-117. The 116-residue stretch at 112–227 folds into the C-type lectin domain; the sequence is FFNGSCYFFS…CDKLLFWICK (116 aa). N-linked (GlcNAc...) asparagine glycosylation is found at Asn-114 and Asn-129. 2 disulfides stabilise this stretch: Cys-134-Cys-226 and Cys-205-Cys-218. 5 residues coordinate Ca(2+): Glu-196, Asn-198, Glu-203, Asn-214, and Asp-215.

Its subcellular location is the membrane. Functionally, probable pathogen-recognition receptor. May mediate the endocytosis of pathogens which are subsequently degraded in lysosomal compartments. May recognize in a calcium-dependent manner high mannose N-linked oligosaccharides in a variety of pathogen antigens. This Mus musculus (Mouse) protein is CD209 antigen-like protein D (Cd209d).